Reading from the N-terminus, the 162-residue chain is Phosphopantetheine adenylyltransferase (162 aa).

Residue T9 coordinates substrate. ATP is bound by residues 9-10 (TF) and H17. Residues K41, L77, and R91 each contribute to the substrate site. ATP is bound by residues 92 to 94 (GLR), E102, and 127 to 133 (RQAIASK).

It belongs to the bacterial CoaD family. In terms of assembly, homohexamer. Mg(2+) is required as a cofactor.

The protein resides in the cytoplasm. The catalysed reaction is (R)-4'-phosphopantetheine + ATP + H(+) = 3'-dephospho-CoA + diphosphate. It functions in the pathway cofactor biosynthesis; coenzyme A biosynthesis; CoA from (R)-pantothenate: step 4/5. Its function is as follows. Reversibly transfers an adenylyl group from ATP to 4'-phosphopantetheine, yielding dephospho-CoA (dPCoA) and pyrophosphate. The chain is Phosphopantetheine adenylyltransferase from Cereibacter sphaeroides (strain ATCC 17025 / ATH 2.4.3) (Rhodobacter sphaeroides).